Consider the following 138-residue polypeptide: Acidic phospholipase A2 BthA-1 (138 aa).

The N-terminal stretch at 1 to 16 is a signal peptide; sequence MRTLWIMAVLLVGVEG. 7 cysteine pairs are disulfide-bonded: Cys42/Cys131, Cys44/Cys60, Cys59/Cys111, Cys65/Cys138, Cys66/Cys104, Cys73/Cys97, and Cys91/Cys102. Ca(2+)-binding residues include Tyr43, Gly47, and Gly48. The active site involves His63. Ca(2+) is bound at residue Asp64. The active site involves Asp105.

This sequence belongs to the phospholipase A2 family. Group II subfamily. D49 sub-subfamily. In terms of assembly, homodimer; non-covalently linked. It depends on Ca(2+) as a cofactor. As to expression, expressed by the venom gland.

The protein localises to the secreted. It carries out the reaction a 1,2-diacyl-sn-glycero-3-phosphocholine + H2O = a 1-acyl-sn-glycero-3-phosphocholine + a fatty acid + H(+). With respect to regulation, inhibited by EDTA and bromophenacyl bromide (BPB). In terms of biological role, snake venom phospholipase A2 (PLA2) that displays edema-inducing activities (activity that is inhibited by EDTA and dexamethasone), inhibits phospholipid-dependent collagen/ADP-induced platelet aggregation, possess hypotensive as well as anticoagulant activities. In addition, this enzyme shows bactericidal activity against E.coli and S.aureus. PLA2 catalyzes the calcium-dependent hydrolysis of the 2-acyl groups in 3-sn-phosphoglycerides. The chain is Acidic phospholipase A2 BthA-1 from Bothrops jararacussu (Jararacussu).